Consider the following 565-residue polypeptide: Transcription factor asqA (565 aa).

The interval 204-273 (MDTAMAQAVR…HSMPALCIDS (70 aa)) is fungal transcription factor domain.

The protein resides in the nucleus. Its function is as follows. Transcription factor that regulates specifically the 4'-methoxyviridicatin/aspoquinolone biosynthesis cluster. This Emericella nidulans (strain FGSC A4 / ATCC 38163 / CBS 112.46 / NRRL 194 / M139) (Aspergillus nidulans) protein is Transcription factor asqA.